The primary structure comprises 588 residues: Transcriptional regulatory protein ASH1 (588 aa).

Serine 56 carries the post-translational modification Phosphoserine. Disordered regions lie at residues 85–109 (SNTA…GNSP), 377–398 (SNNS…QASN), and 417–495 (SSVS…TRHT). The span at 99–109 (PISSLTPGNSP) shows a compositional bias: polar residues. The segment covering 383 to 392 (NVRKPSKNKI) has biased composition (basic residues). Residues 417-433 (SSVSASSSPSPSTPTKS) show a composition bias toward low complexity. Position 465 is a phosphoserine (serine 465). The span at 470-493 (PRRSSNSSITKKGSRRSSGSSPTR) shows a compositional bias: low complexity. The GATA-type; atypical zinc finger occupies 499–526 (CVSCHSSDSPCWRPSWSPRKQDQLCNSC).

As to quaternary structure, component of the RPD3C(L) complex composed of at least ASH1, CTI6, DEP1, PHO23, RPD3, RXT2, RXT3, SAP30, SDS3, SIN3, UME1 and UME6.

The protein localises to the nucleus. Its function is as follows. Component of the RPD3C(L) histone deacetylase complex (HDAC). Responsible for the deacetylation of lysine residues on the N-terminal part of the core histones (H2A, H2B, H3 and H4). Histone deacetylation gives a tag for epigenetic repression and plays an important role in transcriptional regulation, cell cycle progression and developmental events. ASH1 is necessary to repress HO in daughter cells to block mating-type switching through its binding to HO promoter 5'-YTGAT-3' sites. Also involved in pseudohyphal growth. The protein is Transcriptional regulatory protein ASH1 (ASH1) of Saccharomyces cerevisiae (strain ATCC 204508 / S288c) (Baker's yeast).